Consider the following 201-residue polypeptide: FMN-dependent NADH:quinone oxidoreductase (201 aa).

Residues S9 and S16–S18 contribute to the FMN site.

The protein belongs to the azoreductase type 1 family. In terms of assembly, homodimer. It depends on FMN as a cofactor.

It catalyses the reaction 2 a quinone + NADH + H(+) = 2 a 1,4-benzosemiquinone + NAD(+). It carries out the reaction N,N-dimethyl-1,4-phenylenediamine + anthranilate + 2 NAD(+) = 2-(4-dimethylaminophenyl)diazenylbenzoate + 2 NADH + 2 H(+). In terms of biological role, quinone reductase that provides resistance to thiol-specific stress caused by electrophilic quinones. Its function is as follows. Also exhibits azoreductase activity. Catalyzes the reductive cleavage of the azo bond in aromatic azo compounds to the corresponding amines. The chain is FMN-dependent NADH:quinone oxidoreductase from Mesomycoplasma hyopneumoniae (strain 7448) (Mycoplasma hyopneumoniae).